The sequence spans 154 residues: Protein X (154 aa).

A mitochondrial targeting sequence region spans residues 68-117 (PCALRFTSARRMETTVNAHQILPKVLHKRTLGLSAMSTTDLEAYFKDCLF).

The protein belongs to the orthohepadnavirus protein X family. In terms of assembly, may form homodimer. May interact with host CEBPA, CFLAR, CREB1, DDB1, E4F1, HBXIP, HSPD1/HSP60, NFKBIA, POLR2E and SMAD4. Interacts with host SMC5-SMC6 complex and induces its degradation. Interacts with host TRPC4AP; leading to prevent ubiquitination of TRPC4AP. Interacts with host PLSCR1; this interaction promotes ubiquitination and degradation of HBx and impairs HBx-mediated cell proliferation. In terms of processing, a fraction may be phosphorylated in insect cells and HepG2 cells, a human hepatoblastoma cell line. Phosphorylated in vitro by host protein kinase C or mitogen-activated protein kinase. N-acetylated in insect cells.

It localises to the host cytoplasm. The protein resides in the host nucleus. It is found in the host mitochondrion. Its function is as follows. Multifunctional protein that plays a role in silencing host antiviral defenses and promoting viral transcription. Does not seem to be essential for HBV infection. May be directly involved in development of cirrhosis and liver cancer (hepatocellular carcinoma). Most of cytosolic activities involve modulation of cytosolic calcium. The effect on apoptosis is controversial depending on the cell types in which the studies have been conducted. May induce apoptosis by localizing in mitochondria and causing loss of mitochondrial membrane potential. May also modulate apoptosis by binding host CFLAR, a key regulator of the death-inducing signaling complex (DISC). Promotes viral transcription by using the host E3 ubiquitin ligase DDB1 to target the SMC5-SMC6 complex to proteasomal degradation. This host complex would otherwise bind to viral episomal DNA, and prevents its transcription. Moderately stimulates transcription of many different viral and cellular transcription elements. Promoters and enhancers stimulated by HBx contain DNA binding sites for NF-kappa-B, AP-1, AP-2, c-EBP, ATF/CREB, or the calcium-activated factor NF-AT. This Hepatitis B virus genotype E (isolate Cote d'Ivoire/ABI-212/2003) (HBV-E) protein is Protein X.